We begin with the raw amino-acid sequence, 455 residues long: N-lysine methyltransferase setd6 (455 aa).

An SET domain is found at 38–266 (PKVYISTEGT…AGQELFNTYG (229 aa)).

It belongs to the class V-like SAM-binding methyltransferase superfamily. Histone-lysine methyltransferase family. SETD6 subfamily.

The protein localises to the nucleus. In terms of biological role, protein-lysine N-methyltransferase. This is N-lysine methyltransferase setd6 (setd6) from Xenopus laevis (African clawed frog).